A 434-amino-acid chain; its full sequence is ATP-dependent RNA helicase sub2 (434 aa).

The Q motif signature appears at 59-87 (TGFRDFLLKGELLRAITDCGFEHPSEVQQ). The Helicase ATP-binding domain occupies 90-265 (IPTAILNVDV…KKFMRNPLEV (176 aa)). An ATP-binding site is contributed by 103–110 (AKSGLGKT). A DECD box motif is present at residues 212–215 (DECD). One can recognise a Helicase C-terminal domain in the interval 293 to 430 (KLNELLDSLE…EYPEEGVDSS (138 aa)).

Belongs to the DEAD box helicase family. DECD subfamily.

It is found in the nucleus. The enzyme catalyses ATP + H2O = ADP + phosphate + H(+). Its function is as follows. ATP-binding RNA helicase involved in transcription elongation and required for the export of mRNA out of the nucleus. SUB2 also plays a role in pre-mRNA splicing and spliceosome assembly. May be involved in rDNA and telomeric silencing, and maintenance of genome integrity. This Emericella nidulans (strain FGSC A4 / ATCC 38163 / CBS 112.46 / NRRL 194 / M139) (Aspergillus nidulans) protein is ATP-dependent RNA helicase sub2 (sub2).